The chain runs to 782 residues: MTSIIKLTTLSGVQEESALCYLLQVDEFRFLLDCGWDEHFSMDIIDSLRKHVHQIDAVLLSHPDPLHLGALPYAVGKLGLNCAIYATIPVYKMGQMFMYDLYQSRHNTEDFTLFTLDDVDAAFDKIQQLKFSQIVNLKGKGHGLSITPLPAGHMIGGTIWKIVKDGEEEIVYAVDFNHKREIHLNGCSLEMLSRPSLLITDSFNATYVQPRRKQRDEQLLTNVLETLRGDGNVLIAVDTAGRVLELAQLLDQIWRTKDAGLGVYSLALLNNVSYNVVEFSKSQVEWMSDKLMRCFEDKRNNPFQFRHLSLCHGLSDLARVPSPKVVLASQPDLECGFSRDLFIQWCQDPKNSIILTYRTTPGTLARFLIDNPSEKITEIELRKRVKLEGKELEEYLEKEKLKKEAAKKLEQSKEADIDSSDESDIEEDIDQPSAHKTKHDLMMKGEGSRKGSFFKQAKKSYPMFPAPEERIKWDEYGEIIKPEDFLVPELQATEEEKSKLESGLTNGDEPMDQDLSDVPTKCISTTESIEIKARVTYIDYEGRSDGDSIKKIINQMKPRQLIIVHGPPEASQDLAECCRAFGGKDIKVYMPKLHETVDATSETHIYQVRLKDSLVSSLQFCKAKDAELAWIDGVLDMRVSKVDTGVILEEGELKDDGEDSEMQVEAPSDSSVIAQQKAMKSLFGDDEKETGEESEIIPTLEPLPPHEVPGHQSVFMNEPRLSDFKQVLLREGIQAEFVGGVLVCNNQVAVRRTETGRIGLEGCLCQDFYRIRDLLYEQYAIV.

Residues 407-416 show a composition bias toward basic and acidic residues; it reads KKLEQSKEAD. Residues 407–449 are disordered; the sequence is KKLEQSKEADIDSSDESDIEEDIDQPSAHKTKHDLMMKGEGSR. Acidic residues predominate over residues 417–430; that stretch reads IDSSDESDIEEDID. 3 positions are modified to phosphoserine: serine 419, serine 420, and serine 423. Over residues 439 to 449 the composition is skewed to basic and acidic residues; sequence HDLMMKGEGSR. A Phosphoserine modification is found at serine 660.

This sequence belongs to the metallo-beta-lactamase superfamily. RNA-metabolizing metallo-beta-lactamase-like family. CPSF2/YSH1 subfamily. In terms of assembly, component of the cleavage and polyadenylation specificity factor (CPSF) complex, composed of CPSF1, CPSF2, CPSF3, CPSF4 and FIP1L1. Interacts with CPSF3, CSTF2 and SYMPK. Interacts with ZC3H3.

Its subcellular location is the nucleus. Its function is as follows. Component of the cleavage and polyadenylation specificity factor (CPSF) complex that play a key role in pre-mRNA 3'-end formation, recognizing the AAUAAA signal sequence and interacting with poly(A) polymerase and other factors to bring about cleavage and poly(A) addition. Involved in the histone 3' end pre-mRNA processing. The protein is Cleavage and polyadenylation specificity factor subunit 2 (CPSF2) of Homo sapiens (Human).